Reading from the N-terminus, the 319-residue chain is Tyrosine--tRNA ligase (319 aa).

L-tyrosine is bound at residue tyrosine 40. The short motif at 45–53 (PSGRIHMGH) is the 'HIGH' region element. Residues tyrosine 159, glutamine 163, aspartate 166, and glutamine 181 each contribute to the L-tyrosine site. The 'KMSKS' region motif lies at 216 to 220 (KMSSS). ATP is bound at residue serine 219.

It belongs to the class-I aminoacyl-tRNA synthetase family. TyrS type 3 subfamily. In terms of assembly, homodimer.

The protein resides in the cytoplasm. The catalysed reaction is tRNA(Tyr) + L-tyrosine + ATP = L-tyrosyl-tRNA(Tyr) + AMP + diphosphate + H(+). Functionally, catalyzes the attachment of tyrosine to tRNA(Tyr) in a two-step reaction: tyrosine is first activated by ATP to form Tyr-AMP and then transferred to the acceptor end of tRNA(Tyr). This is Tyrosine--tRNA ligase from Methanococcus maripaludis (strain DSM 14266 / JCM 13030 / NBRC 101832 / S2 / LL).